We begin with the raw amino-acid sequence, 87 residues long: DNA-directed RNA polymerase subunit omega (87 aa).

The protein belongs to the RNA polymerase subunit omega family. As to quaternary structure, the RNAP catalytic core consists of 2 alpha, 1 beta, 1 beta' and 1 omega subunit. When a sigma factor is associated with the core the holoenzyme is formed, which can initiate transcription.

It catalyses the reaction RNA(n) + a ribonucleoside 5'-triphosphate = RNA(n+1) + diphosphate. In terms of biological role, promotes RNA polymerase assembly. Latches the N- and C-terminal regions of the beta' subunit thereby facilitating its interaction with the beta and alpha subunits. The chain is DNA-directed RNA polymerase subunit omega from Pseudomonas savastanoi pv. phaseolicola (strain 1448A / Race 6) (Pseudomonas syringae pv. phaseolicola (strain 1448A / Race 6)).